Here is a 350-residue protein sequence, read N- to C-terminus: Ion-translocating oxidoreductase complex subunit D (350 aa).

Helical transmembrane passes span 37–57, 78–109, 124–144, and 158–178; these read YYFG…AYLA, ALVT…IVIV, AMAA…SWVA, and TFNS…HLAI. At T185 the chain carries FMN phosphoryl threonine. A run of 5 helical transmembrane segments spans residues 212–232, 239–259, 264–284, 298–318, and 319–339; these read SVGE…LVML, WHIS…GFLI, FVSP…FFIA, LIFG…GGYP, and DAVA…DYYV.

The protein belongs to the NqrB/RnfD family. The complex is composed of six subunits: RnfA, RnfB, RnfC, RnfD, RnfE and RnfG. It depends on FMN as a cofactor.

The protein localises to the cell inner membrane. Its function is as follows. Part of a membrane-bound complex that couples electron transfer with translocation of ions across the membrane. This chain is Ion-translocating oxidoreductase complex subunit D, found in Shewanella frigidimarina (strain NCIMB 400).